A 317-amino-acid chain; its full sequence is MNAKIVNTLNQPPIAGPFLVFNRLQWAELRKSVPLTLTEQDLKPLLGINEELSLDEVSTIYLPLVRLINYYIEENLRRQTVLNRFLGGQHPKVPYIISIAGSVAVGKSTSARILQSLLANWPQARKVDLITTDGFLYPLADLQEKNLLQKKGFPVSYDTPKLIQFLADIKSGKPHVKAPIYSHLTYDIIPNRFNLVNQPDILILEGLNVLQTGNKAKTFVSDFVDFSVYVDADEALLREWYIRRFLKFRQSAFNNPHSYFKHYASLSEQDAINTATNIWDTINGLNLKQNILPTRERANLILHKGADHAVQEVKLRK.

101-108 is an ATP binding site; sequence GSVAVGKS.

It belongs to the prokaryotic pantothenate kinase family.

The protein resides in the cytoplasm. It carries out the reaction (R)-pantothenate + ATP = (R)-4'-phosphopantothenate + ADP + H(+). The protein operates within cofactor biosynthesis; coenzyme A biosynthesis; CoA from (R)-pantothenate: step 1/5. The sequence is that of Pantothenate kinase from Actinobacillus succinogenes (strain ATCC 55618 / DSM 22257 / CCUG 43843 / 130Z).